The sequence spans 484 residues: uncharacterized protein (484 aa).

Residues 1–14 (MIDSTSTATATSKT) are compositionally biased toward low complexity. The disordered stretch occupies residues 1–32 (MIDSTSTATATSKTVELNTNGSKTDASSENGT). A compositionally biased stretch (polar residues) spans 15–32 (VELNTNGSKTDASSENGT). Position 305 is an N6-(pyridoxal phosphate)lysine (Lys-305).

Belongs to the class-III pyridoxal-phosphate-dependent aminotransferase family. Requires pyridoxal 5'-phosphate as cofactor.

This is an uncharacterized protein from Schizosaccharomyces pombe (strain 972 / ATCC 24843) (Fission yeast).